A 177-amino-acid polypeptide reads, in one-letter code: Large ribosomal subunit protein uL6 (177 aa).

Belongs to the universal ribosomal protein uL6 family. As to quaternary structure, part of the 50S ribosomal subunit.

This protein binds to the 23S rRNA, and is important in its secondary structure. It is located near the subunit interface in the base of the L7/L12 stalk, and near the tRNA binding site of the peptidyltransferase center. This is Large ribosomal subunit protein uL6 from Bartonella quintana (strain Toulouse) (Rochalimaea quintana).